A 473-amino-acid chain; its full sequence is Iron transporter SMF3 (473 aa).

Transmembrane regions (helical) follow at residues 14-34 (FIGP…YATS) and 44-64 (TLLF…CLCV). N-linked (GlcNAc...) asparagine glycosylation occurs at N87. The next 9 helical transmembrane spans lie at 97-117 (AIIA…QILF), 119-139 (IPLT…LMFY), 152-172 (FEFG…LELF), 198-218 (ALYI…LYLG), 257-277 (LIIS…IVAG), 297-317 (LLVH…MLCS), 352-372 (LIAI…GISD), 373-393 (ILNF…APLI), and 448-468 (VFVW…YLLG).

It belongs to the NRAMP family.

The protein localises to the vacuole membrane. It localises to the endoplasmic reticulum membrane. Functionally, has a role in controlling the cellular iron ion levels. Mobilizes vacuolar stores of iron in conditions of low iron levels. The chain is Iron transporter SMF3 (SMF3) from Saccharomyces cerevisiae (strain ATCC 204508 / S288c) (Baker's yeast).